We begin with the raw amino-acid sequence, 108 residues long: Large ribosomal subunit protein eL32 (108 aa).

The segment covering 21 to 30 has biased composition (basic residues); the sequence is RRPRGRTSKM. The tract at residues 21–44 is disordered; that stretch reads RRPRGRTSKMRRYEKGKPAMPAIG.

This sequence belongs to the eukaryotic ribosomal protein eL32 family.

This is Large ribosomal subunit protein eL32 (rpl32e) from Methanothermobacter thermautotrophicus (strain ATCC 29096 / DSM 1053 / JCM 10044 / NBRC 100330 / Delta H) (Methanobacterium thermoautotrophicum).